We begin with the raw amino-acid sequence, 391 residues long: Succinate--CoA ligase [ADP-forming] subunit beta (391 aa).

Residues 9–246 (KHLFADYDIP…ITQEDEAEVQ (238 aa)) form the ATP-grasp domain. ATP is bound by residues Lys-46, 53–55 (GRG), Glu-99, Leu-102, and Glu-107. Residues Asn-199 and Asp-213 each contribute to the Mg(2+) site. Substrate-binding positions include Asn-266 and 323 to 325 (GIV).

This sequence belongs to the succinate/malate CoA ligase beta subunit family. In terms of assembly, heterotetramer of two alpha and two beta subunits. It depends on Mg(2+) as a cofactor.

The enzyme catalyses succinate + ATP + CoA = succinyl-CoA + ADP + phosphate. The catalysed reaction is GTP + succinate + CoA = succinyl-CoA + GDP + phosphate. The protein operates within carbohydrate metabolism; tricarboxylic acid cycle; succinate from succinyl-CoA (ligase route): step 1/1. Its function is as follows. Succinyl-CoA synthetase functions in the citric acid cycle (TCA), coupling the hydrolysis of succinyl-CoA to the synthesis of either ATP or GTP and thus represents the only step of substrate-level phosphorylation in the TCA. The beta subunit provides nucleotide specificity of the enzyme and binds the substrate succinate, while the binding sites for coenzyme A and phosphate are found in the alpha subunit. This Alkalilimnicola ehrlichii (strain ATCC BAA-1101 / DSM 17681 / MLHE-1) protein is Succinate--CoA ligase [ADP-forming] subunit beta.